We begin with the raw amino-acid sequence, 630 residues long: Scarecrow-like protein 34 (630 aa).

Residues 240–628 (KKKKSQVVDF…RTLYASSCWV (389 aa)) enclose the GRAS domain. The segment at 247–312 (VDFRTLLTHC…GSTGPMIQTY (66 aa)) is leucine repeat I (LRI). Positions 331–396 (YRVYLSSSPF…DVPRKLRITG (66 aa)) are VHIID. A VHIID motif is present at residues 362 to 366 (LHIVD). The interval 412 to 444 (ETGRRLAEYCKRFNVPFEYKAIASQNWETIRIE) is leucine repeat II (LRII). A PFYRE region spans residues 454 to 549 (LAVNAGLRLK…REFYGREAMN (96 aa)). An SAW region spans residues 552-628 (ACEEADRVER…RTLYASSCWV (77 aa)).

It belongs to the GRAS family.

Its subcellular location is the nucleus. Probable transcription factor involved in plant development. The protein is Scarecrow-like protein 34 (SCL34) of Arabidopsis thaliana (Mouse-ear cress).